The sequence spans 290 residues: Small ribosomal subunit biogenesis GTPase RsgA (290 aa).

Positions 62-213 (KNSLVRPPIV…IADTPGFSSL (152 aa)) constitute a CP-type G domain. Residues 111–114 (SKLD) and 156–164 (GQTGVGKST) contribute to the GTP site. The Zn(2+) site is built by cysteine 237, cysteine 242, histidine 244, and cysteine 250.

Belongs to the TRAFAC class YlqF/YawG GTPase family. RsgA subfamily. As to quaternary structure, monomer. Associates with 30S ribosomal subunit, binds 16S rRNA. Zn(2+) is required as a cofactor.

It is found in the cytoplasm. Its function is as follows. One of several proteins that assist in the late maturation steps of the functional core of the 30S ribosomal subunit. Helps release RbfA from mature subunits. May play a role in the assembly of ribosomal proteins into the subunit. Circularly permuted GTPase that catalyzes slow GTP hydrolysis, GTPase activity is stimulated by the 30S ribosomal subunit. In Streptococcus agalactiae serotype III (strain NEM316), this protein is Small ribosomal subunit biogenesis GTPase RsgA.